The chain runs to 372 residues: Chaperone protein DnaJ (372 aa).

Residues 3-68 (NLYEILEVNE…EKRKKYDMYG (66 aa)) enclose the J domain. A CR-type zinc finger spans residues 130 to 212 (GTKKEISYKK…CKGKGYEIER (83 aa)). Residues C143, C146, C160, C163, C186, C189, C200, and C203 each coordinate Zn(2+). CXXCXGXG motif repeat units lie at residues 143-150 (CHVCNGDG), 160-167 (CEKCHGTG), 186-193 (CDKCHGEG), and 200-207 (CENCKGKG).

This sequence belongs to the DnaJ family. As to quaternary structure, homodimer. Zn(2+) is required as a cofactor.

It is found in the cytoplasm. Functionally, participates actively in the response to hyperosmotic and heat shock by preventing the aggregation of stress-denatured proteins and by disaggregating proteins, also in an autonomous, DnaK-independent fashion. Unfolded proteins bind initially to DnaJ; upon interaction with the DnaJ-bound protein, DnaK hydrolyzes its bound ATP, resulting in the formation of a stable complex. GrpE releases ADP from DnaK; ATP binding to DnaK triggers the release of the substrate protein, thus completing the reaction cycle. Several rounds of ATP-dependent interactions between DnaJ, DnaK and GrpE are required for fully efficient folding. Also involved, together with DnaK and GrpE, in the DNA replication of plasmids through activation of initiation proteins. The chain is Chaperone protein DnaJ from Finegoldia magna (strain ATCC 29328 / DSM 20472 / WAL 2508) (Peptostreptococcus magnus).